The primary structure comprises 557 residues: Formate--tetrahydrofolate ligase 2 (557 aa).

66 to 73 (TPAGEGKT) is a binding site for ATP.

This sequence belongs to the formate--tetrahydrofolate ligase family.

It catalyses the reaction (6S)-5,6,7,8-tetrahydrofolate + formate + ATP = (6R)-10-formyltetrahydrofolate + ADP + phosphate. It functions in the pathway one-carbon metabolism; tetrahydrofolate interconversion. This is Formate--tetrahydrofolate ligase 2 from Streptococcus pyogenes serotype M28 (strain MGAS6180).